Consider the following 296-residue polypeptide: Diaminopimelate epimerase (296 aa).

Residues asparagine 17, glutamine 49, and asparagine 69 each coordinate substrate. Cysteine 78 acts as the Proton donor in catalysis. Substrate contacts are provided by residues 79 to 80 (GN), asparagine 171, asparagine 205, and 223 to 224 (ER). The Proton acceptor role is filled by cysteine 232. 233–234 (GT) lines the substrate pocket.

Belongs to the diaminopimelate epimerase family. As to quaternary structure, homodimer.

Its subcellular location is the cytoplasm. The catalysed reaction is (2S,6S)-2,6-diaminopimelate = meso-2,6-diaminopimelate. It participates in amino-acid biosynthesis; L-lysine biosynthesis via DAP pathway; DL-2,6-diaminopimelate from LL-2,6-diaminopimelate: step 1/1. In terms of biological role, catalyzes the stereoinversion of LL-2,6-diaminopimelate (L,L-DAP) to meso-diaminopimelate (meso-DAP), a precursor of L-lysine and an essential component of the bacterial peptidoglycan. The chain is Diaminopimelate epimerase from Methylorubrum populi (strain ATCC BAA-705 / NCIMB 13946 / BJ001) (Methylobacterium populi).